The chain runs to 219 residues: MSAKESLLTGTFEERVEAALDALRRGHGVLVTDDEDRENEGDLIFAAETLSDSQMAMLIRECSGIVCLCLTDEKVRALGLPMMVENNSSQYQTAFTVSIEASCGVSTGVSAADRVCTIQAAIADDACPSDLCRPGHVFPLRARPGGVLERRGHTEATVDLMRLAGLKPCGVLCEVTNPDGTMARLPQIVDFGRKHDMVVLTVDDLVRYREMKENKSAAA.

D-ribulose 5-phosphate is bound by residues 37–38, Asp-42, 150–154, and Glu-174; these read RE and RRGHT. Glu-38 provides a ligand contact to Mg(2+). His-153 lines the Mg(2+) pocket.

The protein belongs to the DHBP synthase family. As to quaternary structure, homodimer. It depends on Mg(2+) as a cofactor. Mn(2+) is required as a cofactor.

It catalyses the reaction D-ribulose 5-phosphate = (2S)-2-hydroxy-3-oxobutyl phosphate + formate + H(+). It functions in the pathway cofactor biosynthesis; riboflavin biosynthesis; 2-hydroxy-3-oxobutyl phosphate from D-ribulose 5-phosphate: step 1/1. In terms of biological role, catalyzes the conversion of D-ribulose 5-phosphate to formate and 3,4-dihydroxy-2-butanone 4-phosphate. This chain is 3,4-dihydroxy-2-butanone 4-phosphate synthase, found in Oleidesulfovibrio alaskensis (strain ATCC BAA-1058 / DSM 17464 / G20) (Desulfovibrio alaskensis).